The chain runs to 179 residues: Large ribosomal subunit protein uL5 (179 aa).

Belongs to the universal ribosomal protein uL5 family. As to quaternary structure, part of the 50S ribosomal subunit; part of the 5S rRNA/L5/L18/L25 subcomplex. Contacts the 5S rRNA and the P site tRNA. Forms a bridge to the 30S subunit in the 70S ribosome.

This is one of the proteins that bind and probably mediate the attachment of the 5S RNA into the large ribosomal subunit, where it forms part of the central protuberance. In the 70S ribosome it contacts protein S13 of the 30S subunit (bridge B1b), connecting the 2 subunits; this bridge is implicated in subunit movement. Contacts the P site tRNA; the 5S rRNA and some of its associated proteins might help stabilize positioning of ribosome-bound tRNAs. This Alkaliphilus metalliredigens (strain QYMF) protein is Large ribosomal subunit protein uL5.